Here is a 162-residue protein sequence, read N- to C-terminus: Ribosome maturation factor RimP (162 aa).

The protein belongs to the RimP family.

The protein localises to the cytoplasm. Its function is as follows. Required for maturation of 30S ribosomal subunits. The sequence is that of Ribosome maturation factor RimP from Syntrophotalea carbinolica (strain DSM 2380 / NBRC 103641 / GraBd1) (Pelobacter carbinolicus).